The chain runs to 318 residues: Malate dehydrogenase (318 aa).

Residues 10 to 15 and D34 contribute to the NAD(+) site; that span reads GGGQIG. Substrate is bound by residues R83 and R89. Residues N96 and 119 to 121 contribute to the NAD(+) site; that span reads ISN. Substrate is bound by residues N121 and R152. The active-site Proton acceptor is the H176.

This sequence belongs to the LDH/MDH superfamily. MDH type 3 family.

The enzyme catalyses (S)-malate + NAD(+) = oxaloacetate + NADH + H(+). Functionally, catalyzes the reversible oxidation of malate to oxaloacetate. This Geotalea uraniireducens (strain Rf4) (Geobacter uraniireducens) protein is Malate dehydrogenase.